Consider the following 86-residue polypeptide: Probable protein BRICK1 (86 aa).

Residues 47–81 are a coiled coil; that stretch reads EATTKSKLASLNEKLDILERKLEVLEVQVSSATTN.

This sequence belongs to the BRK1 family. As to quaternary structure, binds SCAR.

Its subcellular location is the cytoplasm. It is found in the cytoskeleton. Functionally, involved in regulation of actin and microtubule organization. Part of a WAVE complex that activates the Arp2/3 complex. This Oryza sativa subsp. japonica (Rice) protein is Probable protein BRICK1.